Consider the following 570-residue polypeptide: Formate--tetrahydrofolate ligase (570 aa).

Residue 65–72 (TPFGEGKT) coordinates ATP.

Belongs to the formate--tetrahydrofolate ligase family.

It carries out the reaction (6S)-5,6,7,8-tetrahydrofolate + formate + ATP = (6R)-10-formyltetrahydrofolate + ADP + phosphate. The protein operates within one-carbon metabolism; tetrahydrofolate interconversion. This is Formate--tetrahydrofolate ligase from Shewanella woodyi (strain ATCC 51908 / MS32).